The primary structure comprises 378 residues: Endopolygalacturonase I (378 aa).

Positions 1-20 (MHLNTTLLVSLALGAASVLA) are cleaved as a signal peptide. The propeptide occupies 21–39 (SPAPPAITAPPTAEEIAKR). Residues C43 and C61 are joined by a disulfide bond. T44 is a glycosylation site (O-linked (Man...) threonine). S46, S48, S52, S53, S55, S57, and S62 each carry an O-linked (Man...) serine glycan. T63 is a glycosylation site (O-linked (Man...) threonine). A glycan (O-linked (Man...) serine) is linked at S73. 5 PbH1 repeats span residues 174 to 204 (SDYLTLKDITIDNSDGDDNGGHNTDAFDIGT), 205 to 226 (STYVTISGATVYNQDDCVAVNS), 227 to 247 (GENIYFSGGYCSGGHGLSIGS), 256 to 277 (VKNVTFVDSTIINSDNGVRIKT), and 285 to 307 (VSDVTYKDITLTSIAKYGIVVQQ). The active-site Proton donor is the D219. A disulfide bridge connects residues C221 and C237. H241 is a catalytic residue. N258 is a glycosylation site (N-linked (GlcNAc...) asparagine). 2 disulfides stabilise this stretch: C345–C350 and C369–C378.

The protein belongs to the glycosyl hydrolase 28 family.

The protein localises to the secreted. It carries out the reaction (1,4-alpha-D-galacturonosyl)n+m + H2O = (1,4-alpha-D-galacturonosyl)n + (1,4-alpha-D-galacturonosyl)m.. Involved in maceration and soft-rotting of plant tissue. Hydrolyzes the 1,4-alpha glycosidic bonds of de-esterified pectate in the smooth region of the plant cell wall. The chain is Endopolygalacturonase I (pgaI) from Aspergillus aculeatus.